We begin with the raw amino-acid sequence, 206 residues long: Large ribosomal subunit protein bL9 (206 aa).

Positions 182–206 are disordered; sequence FAENQQKALAKEMNDNDANSINEEA. Residues 197-206 show a composition bias toward polar residues; sequence NDANSINEEA.

This sequence belongs to the bacterial ribosomal protein bL9 family.

In terms of biological role, binds to the 23S rRNA. This is Large ribosomal subunit protein bL9 from Bartonella henselae (strain ATCC 49882 / DSM 28221 / CCUG 30454 / Houston 1) (Rochalimaea henselae).